A 314-amino-acid chain; its full sequence is Ornithine carbamoyltransferase (314 aa).

Carbamoyl phosphate-binding positions include 61 to 64 (STRT), Gln88, Arg112, and 139 to 142 (HPCQ). L-ornithine contacts are provided by residues Asn170, Asp234, and 238–239 (SM). Carbamoyl phosphate is bound by residues 274–275 (CL) and Arg302.

This sequence belongs to the aspartate/ornithine carbamoyltransferase superfamily. OTCase family.

The protein resides in the cytoplasm. It carries out the reaction carbamoyl phosphate + L-ornithine = L-citrulline + phosphate + H(+). It participates in amino-acid biosynthesis; L-arginine biosynthesis; L-arginine from L-ornithine and carbamoyl phosphate: step 1/3. Functionally, reversibly catalyzes the transfer of the carbamoyl group from carbamoyl phosphate (CP) to the N(epsilon) atom of ornithine (ORN) to produce L-citrulline. The chain is Ornithine carbamoyltransferase from Anoxybacillus flavithermus (strain DSM 21510 / WK1).